A 201-amino-acid chain; its full sequence is Glycerol-3-phosphate acyltransferase (201 aa).

6 helical membrane passes run 3–23 (TVLFALGAYLIGSISFAVVVS), 51–71 (KAAILTLLGDGAKGFLAVWLV), 85–105 (VALVAIAVFLGHLWPVFFRFV), 116–136 (VLLALNGWLGLATLVTWLVIA), 137–157 (YAFRYSSLAALIAAIFAPFYY), and 158–178 (GLLFGPDVILLAVLAMSILLV).

The protein belongs to the PlsY family. Probably interacts with PlsX.

The protein localises to the cell inner membrane. It carries out the reaction an acyl phosphate + sn-glycerol 3-phosphate = a 1-acyl-sn-glycero-3-phosphate + phosphate. The protein operates within lipid metabolism; phospholipid metabolism. In terms of biological role, catalyzes the transfer of an acyl group from acyl-phosphate (acyl-PO(4)) to glycerol-3-phosphate (G3P) to form lysophosphatidic acid (LPA). This enzyme utilizes acyl-phosphate as fatty acyl donor, but not acyl-CoA or acyl-ACP. The sequence is that of Glycerol-3-phosphate acyltransferase from Janthinobacterium sp. (strain Marseille) (Minibacterium massiliensis).